A 432-amino-acid chain; its full sequence is Tyrosine--tRNA ligase (432 aa).

Residues 46 to 55 (PTRPDLHLGH) carry the 'HIGH' region motif. Residues 232–236 (KMSKS) carry the 'KMSKS' region motif. Lysine 235 contributes to the ATP binding site. The S4 RNA-binding domain occupies 369–430 (IWVARLFTLA…GKDRFVRVRL (62 aa)).

Belongs to the class-I aminoacyl-tRNA synthetase family. TyrS type 2 subfamily. Homodimer.

It localises to the cytoplasm. The catalysed reaction is tRNA(Tyr) + L-tyrosine + ATP = L-tyrosyl-tRNA(Tyr) + AMP + diphosphate + H(+). Catalyzes the attachment of tyrosine to tRNA(Tyr) in a two-step reaction: tyrosine is first activated by ATP to form Tyr-AMP and then transferred to the acceptor end of tRNA(Tyr). The polypeptide is Tyrosine--tRNA ligase (Thermus thermophilus (strain ATCC BAA-163 / DSM 7039 / HB27)).